Consider the following 950-residue polypeptide: uncharacterized protein (950 aa).

This is an uncharacterized protein from Rickettsia prowazekii (strain Madrid E).